Here is a 143-residue protein sequence, read N- to C-terminus: Large ribosomal subunit protein uL11 (143 aa).

It belongs to the universal ribosomal protein uL11 family. In terms of assembly, part of the ribosomal stalk of the 50S ribosomal subunit. Interacts with L10 and the large rRNA to form the base of the stalk. L10 forms an elongated spine to which L12 dimers bind in a sequential fashion forming a multimeric L10(L12)X complex. In terms of processing, one or more lysine residues are methylated.

Its function is as follows. Forms part of the ribosomal stalk which helps the ribosome interact with GTP-bound translation factors. The sequence is that of Large ribosomal subunit protein uL11 from Kocuria rhizophila (strain ATCC 9341 / DSM 348 / NBRC 103217 / DC2201).